The chain runs to 423 residues: Probable multifunctional protein ADE2 (423 aa).

The interval 1-263 is SAICAR synthetase; the sequence is MSSLAEIASR…KVMDITATFS (263 aa). The segment at 264–423 is AIR carboxylase; that stretch reads KHQQKCHVLV…NIYNANRKLE (160 aa).

In the N-terminal section; belongs to the SAICAR synthetase family. It in the C-terminal section; belongs to the AIR carboxylase family. Class II subfamily.

The enzyme catalyses 5-amino-1-(5-phospho-D-ribosyl)imidazole-4-carboxylate + L-aspartate + ATP = (2S)-2-[5-amino-1-(5-phospho-beta-D-ribosyl)imidazole-4-carboxamido]succinate + ADP + phosphate + 2 H(+). It catalyses the reaction 5-amino-1-(5-phospho-D-ribosyl)imidazole-4-carboxylate + H(+) = 5-amino-1-(5-phospho-beta-D-ribosyl)imidazole + CO2. Its pathway is purine metabolism; IMP biosynthesis via de novo pathway; 5-amino-1-(5-phospho-D-ribosyl)imidazole-4-carboxamide from 5-amino-1-(5-phospho-D-ribosyl)imidazole-4-carboxylate: step 1/2. It participates in purine metabolism; IMP biosynthesis via de novo pathway; 5-amino-1-(5-phospho-D-ribosyl)imidazole-4-carboxylate from 5-amino-1-(5-phospho-D-ribosyl)imidazole (carboxylase route): step 1/1. The polypeptide is Probable multifunctional protein ADE2 (Caenorhabditis elegans).